A 421-amino-acid chain; its full sequence is Gamma-glutamyl phosphate reductase (421 aa).

The protein belongs to the gamma-glutamyl phosphate reductase family.

Its subcellular location is the cytoplasm. The enzyme catalyses L-glutamate 5-semialdehyde + phosphate + NADP(+) = L-glutamyl 5-phosphate + NADPH + H(+). It participates in amino-acid biosynthesis; L-proline biosynthesis; L-glutamate 5-semialdehyde from L-glutamate: step 2/2. In terms of biological role, catalyzes the NADPH-dependent reduction of L-glutamate 5-phosphate into L-glutamate 5-semialdehyde and phosphate. The product spontaneously undergoes cyclization to form 1-pyrroline-5-carboxylate. The protein is Gamma-glutamyl phosphate reductase of Pseudomonas fluorescens (strain SBW25).